A 926-amino-acid chain; its full sequence is DNA mismatch repair protein MutS (926 aa).

A disordered region spans residues 16–40 (VASTPTRRGRPPGSSAARASNGAGS). Positions 26-40 (PPGSSAARASNGAGS) are enriched in low complexity. 658–665 (GPNMAGKS) provides a ligand contact to ATP.

The protein belongs to the DNA mismatch repair MutS family.

Its function is as follows. This protein is involved in the repair of mismatches in DNA. It is possible that it carries out the mismatch recognition step. This protein has a weak ATPase activity. The sequence is that of DNA mismatch repair protein MutS from Granulibacter bethesdensis (strain ATCC BAA-1260 / CGDNIH1).